Consider the following 916-residue polypeptide: Isoleucine--tRNA ligase (916 aa).

The 'HIGH' region motif lies at 58–68 (PYANGHLHIGH). Glu568 is an L-isoleucyl-5'-AMP binding site. Positions 609–613 (KMSKS) match the 'KMSKS' region motif. Lys612 is an ATP binding site. 4 residues coordinate Zn(2+): Cys891, Cys894, Cys906, and Cys909.

The protein belongs to the class-I aminoacyl-tRNA synthetase family. IleS type 1 subfamily. In terms of assembly, monomer. It depends on Zn(2+) as a cofactor.

The protein localises to the cytoplasm. It catalyses the reaction tRNA(Ile) + L-isoleucine + ATP = L-isoleucyl-tRNA(Ile) + AMP + diphosphate. Functionally, catalyzes the attachment of isoleucine to tRNA(Ile). As IleRS can inadvertently accommodate and process structurally similar amino acids such as valine, to avoid such errors it has two additional distinct tRNA(Ile)-dependent editing activities. One activity is designated as 'pretransfer' editing and involves the hydrolysis of activated Val-AMP. The other activity is designated 'posttransfer' editing and involves deacylation of mischarged Val-tRNA(Ile). The polypeptide is Isoleucine--tRNA ligase (Campylobacter fetus subsp. fetus (strain 82-40)).